A 373-amino-acid chain; its full sequence is Dual-specificity RNA methyltransferase RlmN (373 aa).

Glu94 serves as the catalytic Proton acceptor. The 240-residue stretch at 100–339 folds into the Radical SAM core domain; sequence EEDRATLCVS…VIVRKTRGDD (240 aa). Cys107 and Cys344 are oxidised to a cystine. [4Fe-4S] cluster contacts are provided by Cys114, Cys118, and Cys121. Residues 168 to 169, Ser200, 222 to 224, and Asn301 contribute to the S-adenosyl-L-methionine site; these read GE and SIH. Cys344 serves as the catalytic S-methylcysteine intermediate.

It belongs to the radical SAM superfamily. RlmN family. It depends on [4Fe-4S] cluster as a cofactor.

It localises to the cytoplasm. The catalysed reaction is adenosine(2503) in 23S rRNA + 2 reduced [2Fe-2S]-[ferredoxin] + 2 S-adenosyl-L-methionine = 2-methyladenosine(2503) in 23S rRNA + 5'-deoxyadenosine + L-methionine + 2 oxidized [2Fe-2S]-[ferredoxin] + S-adenosyl-L-homocysteine. The enzyme catalyses adenosine(37) in tRNA + 2 reduced [2Fe-2S]-[ferredoxin] + 2 S-adenosyl-L-methionine = 2-methyladenosine(37) in tRNA + 5'-deoxyadenosine + L-methionine + 2 oxidized [2Fe-2S]-[ferredoxin] + S-adenosyl-L-homocysteine. Specifically methylates position 2 of adenine 2503 in 23S rRNA and position 2 of adenine 37 in tRNAs. m2A2503 modification seems to play a crucial role in the proofreading step occurring at the peptidyl transferase center and thus would serve to optimize ribosomal fidelity. The polypeptide is Dual-specificity RNA methyltransferase RlmN (Shewanella sediminis (strain HAW-EB3)).